Reading from the N-terminus, the 127-residue chain is NADPH-dependent 7-cyano-7-deazaguanine reductase (127 aa).

Catalysis depends on Cys40, which acts as the Thioimide intermediate. The active-site Proton donor is Asp47. Substrate is bound by residues 62-64 (VEL) and 81-82 (HE).

Belongs to the GTP cyclohydrolase I family. QueF type 1 subfamily.

Its subcellular location is the cytoplasm. The enzyme catalyses 7-aminomethyl-7-carbaguanine + 2 NADP(+) = 7-cyano-7-deazaguanine + 2 NADPH + 3 H(+). The protein operates within tRNA modification; tRNA-queuosine biosynthesis. Its function is as follows. Catalyzes the NADPH-dependent reduction of 7-cyano-7-deazaguanine (preQ0) to 7-aminomethyl-7-deazaguanine (preQ1). This is NADPH-dependent 7-cyano-7-deazaguanine reductase from Campylobacter jejuni (strain RM1221).